Here is a 173-residue protein sequence, read N- to C-terminus: UPF0102 protein Psyc_1908 (173 aa).

It belongs to the UPF0102 family.

The sequence is that of UPF0102 protein Psyc_1908 from Psychrobacter arcticus (strain DSM 17307 / VKM B-2377 / 273-4).